Reading from the N-terminus, the 410-residue chain is Arginine deiminase (410 aa).

Cysteine 400 (amidino-cysteine intermediate) is an active-site residue.

The protein belongs to the arginine deiminase family.

It is found in the cytoplasm. It catalyses the reaction L-arginine + H2O = L-citrulline + NH4(+). The protein operates within amino-acid degradation; L-arginine degradation via ADI pathway; carbamoyl phosphate from L-arginine: step 1/2. This Levilactobacillus brevis (strain ATCC 367 / BCRC 12310 / CIP 105137 / JCM 1170 / LMG 11437 / NCIMB 947 / NCTC 947) (Lactobacillus brevis) protein is Arginine deiminase.